The following is a 286-amino-acid chain: Polyamine aminopropyltransferase (286 aa).

Residues 1 to 235 form the PABS domain; the sequence is MSDYQETLYE…GAMTFAWGAT (235 aa). Glutamine 30 lines the S-methyl-5'-thioadenosine pocket. Spermidine is bound by residues histidine 61 and aspartate 85. Residues glutamate 105 and 137 to 138 each bind S-methyl-5'-thioadenosine; that span reads DG. Aspartate 155 serves as the catalytic Proton acceptor. 155–158 contributes to the spermidine binding site; sequence DSTD. S-methyl-5'-thioadenosine is bound at residue proline 162.

Belongs to the spermidine/spermine synthase family. Homodimer or homotetramer.

The protein localises to the cytoplasm. The enzyme catalyses S-adenosyl 3-(methylsulfanyl)propylamine + putrescine = S-methyl-5'-thioadenosine + spermidine + H(+). Its pathway is amine and polyamine biosynthesis; spermidine biosynthesis; spermidine from putrescine: step 1/1. Functionally, catalyzes the irreversible transfer of a propylamine group from the amino donor S-adenosylmethioninamine (decarboxy-AdoMet) to putrescine (1,4-diaminobutane) to yield spermidine. This is Polyamine aminopropyltransferase from Pseudomonas syringae pv. tomato (strain ATCC BAA-871 / DC3000).